A 367-amino-acid chain; its full sequence is Cobalt-precorrin-5B C(1)-methyltransferase (367 aa).

The protein belongs to the CbiD family.

It catalyses the reaction Co-precorrin-5B + S-adenosyl-L-methionine = Co-precorrin-6A + S-adenosyl-L-homocysteine. It participates in cofactor biosynthesis; adenosylcobalamin biosynthesis; cob(II)yrinate a,c-diamide from sirohydrochlorin (anaerobic route): step 6/10. Catalyzes the methylation of C-1 in cobalt-precorrin-5B to form cobalt-precorrin-6A. This chain is Cobalt-precorrin-5B C(1)-methyltransferase, found in Thermosynechococcus vestitus (strain NIES-2133 / IAM M-273 / BP-1).